The following is a 178-amino-acid chain: uncharacterized protein (178 aa).

Residues 1–20 (MKKLLVASLALLILTPVALA) form the signal peptide.

This is an uncharacterized protein from Archaeoglobus fulgidus (strain ATCC 49558 / DSM 4304 / JCM 9628 / NBRC 100126 / VC-16).